The primary structure comprises 1170 residues: WD repeat-containing protein 35 (1170 aa).

5 WD repeats span residues 12–51, 69–108, 113–152, 154–193, and 491–528; these read PNNV…DDSK, GHSG…WYEE, RNKS…IWGK, LKGI…IMKM, and GTRD…LIQK.

In terms of assembly, component of the IFT complex A (IFT-A) complex. IFT-A complex is divided into a core subcomplex composed of IFT122:IFT140:WDR19 which is associated with TULP3 and a peripheral subcomplex composed of IFT43:WDR35:TTC21B. Interacts directy with IFT122, ITF43 and TTC21B. Interacts with IFT43. Interacts with CFAP61. Expressed at high levels in testis and at lower levels in the brain (at protein level). Also present in other tissues, including heart, uterus, spinal cord, ovary, liver, kidney, lung, pancreas and stomach.

The protein resides in the cytoplasm. It is found in the cytoskeleton. Its subcellular location is the microtubule organizing center. The protein localises to the centrosome. It localises to the cilium axoneme. The protein resides in the cilium basal body. Its function is as follows. As a component of the IFT complex A (IFT-A), a complex required for retrograde ciliary transport and entry into cilia of G protein-coupled receptors (GPCRs), it is involved in ciliogenesis and ciliary protein trafficking. May promote CASP3 activation and TNF-stimulated apoptosis. In Rattus norvegicus (Rat), this protein is WD repeat-containing protein 35 (Wdr35).